A 483-amino-acid chain; its full sequence is O-acetyltransferase pboB (483 aa).

It belongs to the fumigaclavine B O-acetyltransferase family. In terms of assembly, monomer.

Its pathway is secondary metabolite biosynthesis. In terms of biological role, O-acetyltransferase; part of the gene cluster that mediates the biosynthesis of protubonine B, a hydroxylated and diacetylated cyclo-L-Trp-L-Leu derivative. Within the pathway, pboB catalyzes the acetylation of protubonine C at N-1 of the indoline ring to produce protubonine B. The first step of the protubonine B synthesis is performed by the nonribosomal peptide synthetase pboA that catalyzes the formation of cyclo-L-Trp-L-Leu by condensing L-Leu with L-Trp. The flavin-dependent monooxygenase pboD is responsible for hydroxylation at C-3 of the indole ring and subsequent formation of the pyrrolidine ring, leadind to protubonine D. Protubonine D is further diacetylated by two acetyltransferases, pboB and pboC, to form the final product protubonine B via protubonine C. This is O-acetyltransferase pboB from Aspergillus ustus.